A 340-amino-acid polypeptide reads, in one-letter code: Beta-1,3-N-acetylglucosaminyltransferase radical fringe (340 aa).

Residues 1 to 4 lie on the Cytoplasmic side of the membrane; that stretch reads MKIT. A helical; Signal-anchor for type II membrane protein membrane pass occupies residues 5–25; that stretch reads YVGLIKVCFLVFLLLCATVLL. The Lumenal portion of the chain corresponds to 26-340; the sequence is NISWRQRDSS…AFSLAEDPTR (315 aa). The N-linked (GlcNAc...) asparagine glycan is linked to asparagine 42. Arginine 110 is a substrate binding site. Asparagine 149 is a glycosylation site (N-linked (GlcNAc...) asparagine). Disulfide bonds link cysteine 150/cysteine 161 and cysteine 179/cysteine 242. Aspartate 183 lines the substrate pocket. Residue aspartate 184 coordinates Mn(2+). Aspartate 272 is a catalytic residue. A Mn(2+)-binding site is contributed by histidine 296.

The protein belongs to the glycosyltransferase 31 family. Mn(2+) is required as a cofactor.

Its subcellular location is the golgi apparatus membrane. The catalysed reaction is 3-O-(alpha-L-fucosyl)-L-threonyl-[EGF-like domain protein] + UDP-N-acetyl-alpha-D-glucosamine = 3-O-(N-acetyl-beta-D-glucosaminyl-(1-&gt;3)-alpha-L-fucosyl)-L-threonyl-[EGF-like domain protein] + UDP + H(+). It carries out the reaction 3-O-(alpha-L-fucosyl)-L-seryl-[EGF-like domain protein] + UDP-N-acetyl-alpha-D-glucosamine = 3-O-(N-acetyl-beta-D-glucosaminyl-(1-&gt;3)-alpha-L-fucosyl)-L-seryl-[EGF-like domain protein] + UDP + H(+). Its function is as follows. Glycosyltransferase that initiates the elongation of O-linked fucose residues attached to EGF-like repeats in the extracellular domain of Notch molecules. The polypeptide is Beta-1,3-N-acetylglucosaminyltransferase radical fringe (rfng) (Xenopus laevis (African clawed frog)).